Reading from the N-terminus, the 330-residue chain is Protein TIFY 11f (330 aa).

Residues 61–97 (EAAAAAQLKIMYGGRMLVFDDFFPAGGAVVELVRAAA) form the Tify 1 domain. The Jas signature appears at 124-142 (PVVRKVSLQRFVEKRRRMR). The Nuclear localization signal motif lies at 126–133 (VRKVSLQR). The Tify 2 domain occupies 228–264 (EAAAAAQLKIMYGGRMLVFDDFFPAGGAVVELVRAAA). The interval 267-330 (GRDDDGARAR…SGRTDDAAFY (64 aa)) is disordered.

Belongs to the TIFY/JAZ family. In terms of processing, ubiquitinated. Targeted for degradation by the SCF(COI1) E3 ubiquitin ligase-proteasome pathway during jasmonate signaling.

The protein localises to the nucleus. In terms of biological role, repressor of jasmonate responses. The protein is Protein TIFY 11f of Oryza sativa subsp. japonica (Rice).